The primary structure comprises 386 residues: Succinate--CoA ligase [ADP-forming] subunit beta (386 aa).

Residues K46, E99, A102, and E107 each contribute to the ATP site. The Mg(2+) site is built by N199 and D213. Substrate-binding positions include N264 and 321–323 (GIM).

The protein belongs to the succinate/malate CoA ligase beta subunit family. Heterotetramer of two alpha and two beta subunits. The cofactor is Mg(2+).

The enzyme catalyses succinate + ATP + CoA = succinyl-CoA + ADP + phosphate. It carries out the reaction GTP + succinate + CoA = succinyl-CoA + GDP + phosphate. It participates in carbohydrate metabolism; tricarboxylic acid cycle; succinate from succinyl-CoA (ligase route): step 1/1. In terms of biological role, succinyl-CoA synthetase functions in the citric acid cycle (TCA), coupling the hydrolysis of succinyl-CoA to the synthesis of either ATP or GTP and thus represents the only step of substrate-level phosphorylation in the TCA. The beta subunit provides nucleotide specificity of the enzyme and binds the substrate succinate, while the binding sites for coenzyme A and phosphate are found in the alpha subunit. This chain is Succinate--CoA ligase [ADP-forming] subunit beta, found in Orientia tsutsugamushi (strain Ikeda) (Rickettsia tsutsugamushi).